The chain runs to 184 residues: Coordinator of PRMT5 and differentiation stimulator (184 aa).

M1 is modified (N-acetylmethionine). Residues 1–14 show a composition bias toward low complexity; the sequence is MDLQAAGAQAQGAA. The interval 1–136 is disordered; that stretch reads MDLQAAGAQA…PYDADDIQES (136 aa). Residues 42 to 56 are compositionally biased toward basic and acidic residues; that stretch reads SSQERETEKAMDRLA. Phosphoserine is present on residues S66 and S75. Over residues 78–89 the composition is skewed to acidic residues; the sequence is EGFAMDEEDSDG.

As to quaternary structure, interacts with PRMT5. Interacts with histone H4; specifically interacts with the N-terminus of histone H4 but not with histone H3. Interacts with CBFB. Found in a complex with PRMT5, RUNX1 and CBFB.

It localises to the nucleus. Histone-binding protein required for histone H4 methyltransferase activity of PRMT5. Specifically required for histone H4 'Arg-3' methylation mediated by PRMT5, but not histone H3 'Arg-8' methylation, suggesting that it modulates the substrate specificity of PRMT5. Specifically interacts with the N-terminus of histone H4 but not with histone H3, suggesting that it acts by promoting the association between histone H4 and PRMT5. Involved in CCNE1 promoter repression. Plays a role in muscle cell differentiation by modulating the recruitment of PRMT5 to the promoter of genes involved in the coordination between cell cycle exit and muscle differentiation. This chain is Coordinator of PRMT5 and differentiation stimulator (COPRS), found in Homo sapiens (Human).